A 397-amino-acid polypeptide reads, in one-letter code: Succinate--CoA ligase [ADP-forming] subunit beta (397 aa).

Positions 9-254 (KALLKGYGAP…ETEEDAKEIE (246 aa)) constitute an ATP-grasp domain. Residues Lys-46, 53-55 (GRG), Glu-109, Ala-112, and Glu-117 each bind ATP. Asn-209 and Asp-223 together coordinate Mg(2+). Residues Asn-274 and 331 to 333 (GIM) each bind substrate.

It belongs to the succinate/malate CoA ligase beta subunit family. Heterotetramer of two alpha and two beta subunits. It depends on Mg(2+) as a cofactor.

It catalyses the reaction succinate + ATP + CoA = succinyl-CoA + ADP + phosphate. The catalysed reaction is GTP + succinate + CoA = succinyl-CoA + GDP + phosphate. It functions in the pathway carbohydrate metabolism; tricarboxylic acid cycle; succinate from succinyl-CoA (ligase route): step 1/1. In terms of biological role, succinyl-CoA synthetase functions in the citric acid cycle (TCA), coupling the hydrolysis of succinyl-CoA to the synthesis of either ATP or GTP and thus represents the only step of substrate-level phosphorylation in the TCA. The beta subunit provides nucleotide specificity of the enzyme and binds the substrate succinate, while the binding sites for coenzyme A and phosphate are found in the alpha subunit. The chain is Succinate--CoA ligase [ADP-forming] subunit beta from Rhizobium etli (strain ATCC 51251 / DSM 11541 / JCM 21823 / NBRC 15573 / CFN 42).